A 318-amino-acid polypeptide reads, in one-letter code: Lipoyl synthase (318 aa).

[4Fe-4S] cluster-binding residues include cysteine 64, cysteine 69, cysteine 75, cysteine 90, cysteine 94, cysteine 97, and serine 304. The region spanning phenylalanine 76–lysine 293 is the Radical SAM core domain.

It belongs to the radical SAM superfamily. Lipoyl synthase family. The cofactor is [4Fe-4S] cluster.

The protein localises to the cytoplasm. The enzyme catalyses [[Fe-S] cluster scaffold protein carrying a second [4Fe-4S](2+) cluster] + N(6)-octanoyl-L-lysyl-[protein] + 2 oxidized [2Fe-2S]-[ferredoxin] + 2 S-adenosyl-L-methionine + 4 H(+) = [[Fe-S] cluster scaffold protein] + N(6)-[(R)-dihydrolipoyl]-L-lysyl-[protein] + 4 Fe(3+) + 2 hydrogen sulfide + 2 5'-deoxyadenosine + 2 L-methionine + 2 reduced [2Fe-2S]-[ferredoxin]. Its pathway is protein modification; protein lipoylation via endogenous pathway; protein N(6)-(lipoyl)lysine from octanoyl-[acyl-carrier-protein]: step 2/2. In terms of biological role, catalyzes the radical-mediated insertion of two sulfur atoms into the C-6 and C-8 positions of the octanoyl moiety bound to the lipoyl domains of lipoate-dependent enzymes, thereby converting the octanoylated domains into lipoylated derivatives. The sequence is that of Lipoyl synthase from Pseudomonas syringae pv. tomato (strain ATCC BAA-871 / DC3000).